A 528-amino-acid chain; its full sequence is Probable rhamnogalacturonate lyase A (528 aa).

The first 20 residues, 1-20 (MLSKATLLLFLPSWARVTYA), serve as a signal peptide directing secretion. N-linked (GlcNAc...) asparagine glycosylation is present at N46. A disulfide bridge links C50 with C93. N-linked (GlcNAc...) asparagine glycosylation occurs at N148. C184 and C193 are disulfide-bonded. N351 carries N-linked (GlcNAc...) asparagine glycosylation.

This sequence belongs to the polysaccharide lyase 4 family.

The protein resides in the secreted. It carries out the reaction Endotype eliminative cleavage of L-alpha-rhamnopyranosyl-(1-&gt;4)-alpha-D-galactopyranosyluronic acid bonds of rhamnogalacturonan I domains in ramified hairy regions of pectin leaving L-rhamnopyranose at the reducing end and 4-deoxy-4,5-unsaturated D-galactopyranosyluronic acid at the non-reducing end.. In terms of biological role, pectinolytic enzymes consist of four classes of enzymes: pectin lyase, polygalacturonase, pectin methylesterase and rhamnogalacturonase. Degrades the rhamnogalacturonan I (RG-I) backbone of pectin. The polypeptide is Probable rhamnogalacturonate lyase A (rglA) (Aspergillus fumigatus (strain CBS 144.89 / FGSC A1163 / CEA10) (Neosartorya fumigata)).